A 781-amino-acid polypeptide reads, in one-letter code: MEQLIPLVNQLQDLVYNTIGSDFLDLPSIVVVGSQSCGKSSVLENIVGKDFLPRGTGIVTRRPLILQLINLKRKTKNNHDEESTSDNNSEETSAAGETGSLEGIEEDSDEIEDYAEFLHIPDTKFTDMNKVRAEIENETLRVAGANKGINKLPINLKIYSTRVLNLTLIDLPGLTKIPVGDQPTDIEAQTRSLIMEYISRPNSIILAVSPANFDIVNSEGLKLARSVDPKGKRTIGVLTKLDLMDQGTNAMDILSGRVYPLKLGFVATVNRSQSDIVSHKSMRDALQSERSFFEHHPAYRTIKDRCGTPYLAKTLSNLLVSHIRERLPDIKARLSTLISQTQQQLNNYGDFKLSDQSQRGIILLQAMNRFANTFIASIDGNSSNIPTKELSGGARLYSIFNNVFTTALNSIDPLQNLSTVDIRTAILNSTGSRATLFLSEMAFDILVKPQLNLLAAPCHQCVELVYEELMKICHYSGDSDISHFPKLQTALVETVSDLLRENLTPTYSFVESLIAIQSAYINTNHPDFLGVQGAMAVVLSRKEQNRLMLSQENDEPISSALDTVKPDGIELYSSDPDTSVKSITNKATNEITTLKSDDSAKMQPLDVLASKRYNNAFSTETAERKTFLSYVFGANNATRKAMSIDKSSSYPLNDSLSGGDTNHKNNHPLKMTDLSNEVETMALEDMSEREEVEVDLIKELITSYFNLTRKIIIDQVPKVIMHLLVNASKDAIQNRLVSKLYREDFFDTLLIEDENVKSEREKCERLLSVYNQANKIISTVF.

One can recognise a Dynamin-type G domain in the interval 23–328 (FLDLPSIVVV…LVSHIRERLP (306 aa)). Residues 33–40 (GSQSCGKS) are G1 motif. Residue 33–40 (GSQSCGKS) participates in GTP binding. Residues 59-61 (VTR) are G2 motif. Residues 76–103 (KNNHDEESTSDNNSEETSAAGETGSLEG) form a disordered region. A G3 motif region spans residues 170 to 173 (DLPG). GTP is bound by residues 170-174 (DLPGL) and 239-242 (TKLD). The interval 239–242 (TKLD) is G4 motif. The tract at residues 269-272 (VNRS) is G5 motif. The region spanning 694–781 (VDLIKELITS…QANKIISTVF (88 aa)) is the GED domain.

This sequence belongs to the TRAFAC class dynamin-like GTPase superfamily. Dynamin/Fzo/YdjA family.

It localises to the cytoplasm. The protein localises to the mitochondrion outer membrane. It catalyses the reaction GTP + H2O = GDP + phosphate + H(+). In terms of biological role, microtubule-associated force-producing protein that mediates mitochondrial fission during interphasic growth and at cell division. Fission of mitochondria occurs in many cell types and constitutes an important step in mitochondria morphology, which is balanced between fusion and fission. With vps1, acts redundantly in peroxisome biogenesis, which is under cell cycle control. The chain is Dynamin-related protein dnm1 (dnm1) from Schizosaccharomyces pombe (strain 972 / ATCC 24843) (Fission yeast).